Consider the following 512-residue polypeptide: ATP synthase subunit alpha (512 aa).

An ATP-binding site is contributed by 169-176; that stretch reads GDRQTGKT.

The protein belongs to the ATPase alpha/beta chains family. In terms of assembly, F-type ATPases have 2 components, CF(1) - the catalytic core - and CF(0) - the membrane proton channel. CF(1) has five subunits: alpha(3), beta(3), gamma(1), delta(1), epsilon(1). CF(0) has three main subunits: a(1), b(2) and c(9-12). The alpha and beta chains form an alternating ring which encloses part of the gamma chain. CF(1) is attached to CF(0) by a central stalk formed by the gamma and epsilon chains, while a peripheral stalk is formed by the delta and b chains.

It localises to the cell membrane. It catalyses the reaction ATP + H2O + 4 H(+)(in) = ADP + phosphate + 5 H(+)(out). Produces ATP from ADP in the presence of a proton gradient across the membrane. The alpha chain is a regulatory subunit. This Buchnera aphidicola subsp. Acyrthosiphon pisum (strain 5A) protein is ATP synthase subunit alpha.